A 30-amino-acid chain; its full sequence is Kappa-sparatoxin-Hv1b (30 aa).

3 cysteine pairs are disulfide-bonded: C3-C17, C10-C22, and C16-C26. Residue W30 is modified to Tryptophan amide.

Belongs to the neurotoxin 10 (Hwtx-1) family. 19 (HpTX2) subfamily. In terms of tissue distribution, expressed by the venom gland.

Its subcellular location is the secreted. Its function is as follows. Inhibitor of voltage-gated potassium channels of the Kv4/KCND family. Inhibition of Kv4.3/KCND3 and Kv4.2/KCND2 is strongly voltage-dependent, while inhibition of Kv4.1/KCND1 shows less voltage-dependence. Its binding site may be near the potassium channel voltage sensor. Also blocks calcium channels. This is Kappa-sparatoxin-Hv1b from Heteropoda venatoria (Brown huntsman spider).